The chain runs to 292 residues: NAD kinase (292 aa).

Catalysis depends on Asp-73, which acts as the Proton acceptor. Residues 73–74 (DG), 147–148 (NE), His-158, Arg-175, Asp-177, 188–193 (TAYSLS), and Gln-247 each bind NAD(+).

It belongs to the NAD kinase family. The cofactor is a divalent metal cation.

It localises to the cytoplasm. It catalyses the reaction NAD(+) + ATP = ADP + NADP(+) + H(+). Its function is as follows. Involved in the regulation of the intracellular balance of NAD and NADP, and is a key enzyme in the biosynthesis of NADP. Catalyzes specifically the phosphorylation on 2'-hydroxyl of the adenosine moiety of NAD to yield NADP. This is NAD kinase from Shigella boydii serotype 18 (strain CDC 3083-94 / BS512).